The following is a 161-amino-acid chain: Ribonuclease H (161 aa).

The RNase H type-1 domain maps to glycine 11–threonine 152. Mg(2+) contacts are provided by aspartate 20, glutamate 58, aspartate 80, and aspartate 144. The interval histidine 137–glycine 161 is disordered.

The protein belongs to the RNase H family. As to quaternary structure, monomer. Requires Mg(2+) as cofactor.

It is found in the cytoplasm. The catalysed reaction is Endonucleolytic cleavage to 5'-phosphomonoester.. Endonuclease that specifically degrades the RNA of RNA-DNA hybrids. In Rhodopseudomonas palustris (strain HaA2), this protein is Ribonuclease H.